The chain runs to 713 residues: Forkhead box protein P2 (713 aa).

Residues 1–28 show a composition bias toward polar residues; it reads MMQESATETISNSSMNQNGMSTLSSQLD. 2 disordered regions span residues 1-45 and 279-337; these read MMQE…SEVS and DNGI…TGAS. Over residues 290-303 the composition is skewed to low complexity; that stretch reads TTNNSSSTTSSTTS. Over residues 313–322 the composition is skewed to polar residues; it reads SIVNGQSSVL. Positions 324–335 are enriched in basic and acidic residues; the sequence is ARRDSSSHEETG. The C2H2-type zinc-finger motif lies at 344–369; the sequence is GVCKWPGCESICEDFGQFLKHLNNEH. A leucine-zipper region spans residues 386–407; the sequence is VQQLEIQLSKERERLQAMMTHL. A CTBP1-binding region spans residues 420–424; the sequence is PLNLV. The segment covering 436–457 has biased composition (low complexity); sequence TSPQSLPQTPTTPTAPVTPITQ. The segment at 436–463 is disordered; that stretch reads TSPQSLPQTPTTPTAPVTPITQGPSVIT. The fork-head DNA-binding region spans 502-592; it reads RPPFTYATLI…SQKITGSPTL (91 aa). Disordered regions lie at residues 647 to 666 and 676 to 713; these read LDHI…QPHI and VIAE…EDLE. The span at 697–713 shows a compositional bias: acidic residues; the sequence is LEDDREIEEEPLSEDLE.

In terms of assembly, forms homodimers and heterodimers with FOXP1 and FOXP4. Dimerization is required for DNA-binding. Interacts with CTBP1. Interacts with FOXP1. Interacts with TBR1. Interacts with ZMYM2.

Its subcellular location is the nucleus. In terms of biological role, transcriptional repressor that may play a role in the specification and differentiation of lung epithelium. May also play a role in developing neural, gastrointestinal and cardiovascular tissues. Can act with CTBP1 to synergistically repress transcription but CTPBP1 is not essential. Plays a role in synapse formation by regulating SRPX2 levels. The sequence is that of Forkhead box protein P2 (FOXP2) from Hylobates lar (Lar gibbon).